We begin with the raw amino-acid sequence, 146 residues long: Large ribosomal subunit protein uL15 (146 aa).

The tract at residues 1 to 54 is disordered; that stretch reads MTLRLNELAPAEGAKREHRRLGRGIGSGVGKTGGRGIKGQKSRKSGGVRPGFEG. Residues 23 to 37 show a composition bias toward gly residues; sequence RGIGSGVGKTGGRGI.

The protein belongs to the universal ribosomal protein uL15 family. As to quaternary structure, part of the 50S ribosomal subunit.

Functionally, binds to the 23S rRNA. This is Large ribosomal subunit protein uL15 from Acinetobacter baumannii (strain SDF).